The following is a 160-amino-acid chain: uncharacterized protein (160 aa).

The N-acetyltransferase domain maps to 2 to 140; the sequence is MIIIPNNEIA…KARRLKPEIP (139 aa).

This is an uncharacterized protein from Bacillus subtilis (strain 168).